Consider the following 86-residue polypeptide: RNA-binding protein Hfq (86 aa).

The Sm domain occupies 12–73; the sequence is DIFLNQVRKE…ISTITPQKPV (62 aa).

Belongs to the Hfq family. In terms of assembly, homohexamer.

Its function is as follows. RNA chaperone that binds small regulatory RNA (sRNAs) and mRNAs to facilitate mRNA translational regulation in response to envelope stress, environmental stress and changes in metabolite concentrations. Also binds with high specificity to tRNAs. This is RNA-binding protein Hfq from Thermoanaerobacter pseudethanolicus (strain ATCC 33223 / 39E) (Clostridium thermohydrosulfuricum).